An 838-amino-acid polypeptide reads, in one-letter code: Multiphosphoryl transfer protein (838 aa).

The PTS EIIA type-2 domain occupies A7–D147. The active-site Tele-phosphohistidine intermediate; for EIIA activity is the H67. A Phosphohistidine; by HPr modification is found at H67. The region spanning A161 to E253 is the HPr domain. H175 functions as the Pros-phosphohistidine intermediate; for HPr activity in the catalytic mechanism. H175 carries the phosphohistidine; by EI modification. A PTS EI region spans residues A274 to A838. Residue H460 is the Tele-phosphohistidine intermediate; for PTS EI activity of the active site. Position 460 is a phosphohistidine; by autocatalysis (H460). 2 residues coordinate phosphoenolpyruvate: R567 and R603. Mg(2+)-binding residues include E697 and D721. Phosphoenolpyruvate contacts are provided by residues N720–D721 and R731. C768 (proton donor) is an active-site residue.

It belongs to the PEP-utilizing enzyme family. Mg(2+) is required as a cofactor.

Its subcellular location is the cytoplasm. It catalyses the reaction L-histidyl-[protein] + phosphoenolpyruvate = N(pros)-phospho-L-histidyl-[protein] + pyruvate. Functionally, the phosphoenolpyruvate-dependent sugar phosphotransferase system (sugar PTS), a major carbohydrate active transport system, catalyzes the phosphorylation of incoming sugar substrates concomitantly with their translocation across the cell membrane. The enzyme II FruAB PTS system is involved in fructose transport. The chain is Multiphosphoryl transfer protein from Xanthomonas campestris pv. campestris (strain ATCC 33913 / DSM 3586 / NCPPB 528 / LMG 568 / P 25).